Here is a 259-residue protein sequence, read N- to C-terminus: Imidazole glycerol phosphate synthase subunit HisF (259 aa).

Active-site residues include D11 and D130.

The protein belongs to the HisA/HisF family. In terms of assembly, heterodimer of HisH and HisF.

It is found in the cytoplasm. The catalysed reaction is 5-[(5-phospho-1-deoxy-D-ribulos-1-ylimino)methylamino]-1-(5-phospho-beta-D-ribosyl)imidazole-4-carboxamide + L-glutamine = D-erythro-1-(imidazol-4-yl)glycerol 3-phosphate + 5-amino-1-(5-phospho-beta-D-ribosyl)imidazole-4-carboxamide + L-glutamate + H(+). It functions in the pathway amino-acid biosynthesis; L-histidine biosynthesis; L-histidine from 5-phospho-alpha-D-ribose 1-diphosphate: step 5/9. IGPS catalyzes the conversion of PRFAR and glutamine to IGP, AICAR and glutamate. The HisF subunit catalyzes the cyclization activity that produces IGP and AICAR from PRFAR using the ammonia provided by the HisH subunit. In Polaromonas naphthalenivorans (strain CJ2), this protein is Imidazole glycerol phosphate synthase subunit HisF.